We begin with the raw amino-acid sequence, 179 residues long: MLDLILKTIWLLLPCYTPNNFAVLVGGGTPIDFGKTFVDGKRILGDGKTWRGFVGGVAGGVLTANLQYAIEKLSGLAIYSSLPFNEFFTLTFLLAFGAMFGDLCGSFIKRRFGYERGSRFLIVDQLMFLLVALLIASLYPPFWKLFTAEIIALAVIITPALHMGINYIAYRLNLKEVPW.

The next 4 helical transmembrane spans lie at 53–73, 88–108, 120–140, and 145–165; these read FVGG…IEKL, FTLT…GSFI, FLIV…SLYP, and LFTA…HMGI.

It belongs to the CDP-archaeol synthase family. Requires Mg(2+) as cofactor.

It is found in the cell membrane. It carries out the reaction 2,3-bis-O-(geranylgeranyl)-sn-glycerol 1-phosphate + CTP + H(+) = CDP-2,3-bis-O-(geranylgeranyl)-sn-glycerol + diphosphate. Its pathway is membrane lipid metabolism; glycerophospholipid metabolism. Catalyzes the formation of CDP-2,3-bis-(O-geranylgeranyl)-sn-glycerol (CDP-archaeol) from 2,3-bis-(O-geranylgeranyl)-sn-glycerol 1-phosphate (DGGGP) and CTP. This reaction is the third ether-bond-formation step in the biosynthesis of archaeal membrane lipids. Can use CTP or dCTP, but not ATP, GTP or TTP. The sequence is that of CDP-archaeol synthase from Archaeoglobus fulgidus (strain ATCC 49558 / DSM 4304 / JCM 9628 / NBRC 100126 / VC-16).